A 62-amino-acid chain; its full sequence is Negative regulatory protein YxlE (62 aa).

2 helical membrane-spanning segments follow: residues 7–27 and 37–57; these read MILP…ISCI and WMWA…FFTV.

Its subcellular location is the cell membrane. Its function is as follows. Together with YxlD is important for negative regulation of sigma Y activity. The protein is Negative regulatory protein YxlE (yxlE) of Bacillus subtilis (strain 168).